The chain runs to 192 residues: Peptidyl-tRNA hydrolase (192 aa).

Tyr18 provides a ligand contact to tRNA. His23 acts as the Proton acceptor in catalysis. Residues Phe69, Asn71, and Asn117 each coordinate tRNA.

The protein belongs to the PTH family. In terms of assembly, monomer.

It localises to the cytoplasm. It carries out the reaction an N-acyl-L-alpha-aminoacyl-tRNA + H2O = an N-acyl-L-amino acid + a tRNA + H(+). In terms of biological role, hydrolyzes ribosome-free peptidyl-tRNAs (with 1 or more amino acids incorporated), which drop off the ribosome during protein synthesis, or as a result of ribosome stalling. Functionally, catalyzes the release of premature peptidyl moieties from peptidyl-tRNA molecules trapped in stalled 50S ribosomal subunits, and thus maintains levels of free tRNAs and 50S ribosomes. The protein is Peptidyl-tRNA hydrolase of Neisseria gonorrhoeae (strain ATCC 700825 / FA 1090).